The chain runs to 328 residues: Phosphatidate cytidylyltransferase (328 aa).

Over residues 15–29 (SGRSATKSVTTNDAG) the composition is skewed to polar residues. The segment at 15–50 (SGRSATKSVTTNDAGTGNPAEQPARGAKQQPATETS) is disordered. 7 consecutive transmembrane segments (helical) span residues 58-78 (AAIV…VFVP), 103-123 (AGYL…VWLT), 124-144 (WPFG…VCMI), 173-193 (ATVF…MLVY), 202-222 (FCMM…GVLF), 239-259 (GFAG…TFLV), and 263-283 (PWIG…GDLV).

It belongs to the CDS family.

The protein resides in the cell membrane. It catalyses the reaction a 1,2-diacyl-sn-glycero-3-phosphate + CTP + H(+) = a CDP-1,2-diacyl-sn-glycerol + diphosphate. The protein operates within phospholipid metabolism; CDP-diacylglycerol biosynthesis; CDP-diacylglycerol from sn-glycerol 3-phosphate: step 3/3. The sequence is that of Phosphatidate cytidylyltransferase (cdsA) from Mycobacterium tuberculosis (strain CDC 1551 / Oshkosh).